A 305-amino-acid polypeptide reads, in one-letter code: Probable alpha-L-glutamate ligase (305 aa).

An ATP-grasp domain is found at 119–301 (LQVLAAQHIP…IAGLIIDYLL (183 aa)). Residues Lys-155, 192-193 (DF), Asp-201, and 225-227 (RAN) contribute to the ATP site. Residues Asp-262, Glu-274, and Asn-276 each contribute to the Mg(2+) site. Mn(2+)-binding residues include Asp-262, Glu-274, and Asn-276.

The protein belongs to the RimK family. It depends on Mg(2+) as a cofactor. Mn(2+) serves as cofactor.

The polypeptide is Probable alpha-L-glutamate ligase (Haemophilus ducreyi (strain 35000HP / ATCC 700724)).